The chain runs to 495 residues: Cobyric acid synthase (495 aa).

The GATase cobBQ-type domain maps to 253–446 (KISIAIVYFP…FHGIFDGSAF (194 aa)). The Nucleophile role is filled by Cys334. His438 is an active-site residue.

This sequence belongs to the CobB/CobQ family. CobQ subfamily.

Its pathway is cofactor biosynthesis; adenosylcobalamin biosynthesis. In terms of biological role, catalyzes amidations at positions B, D, E, and G on adenosylcobyrinic A,C-diamide. NH(2) groups are provided by glutamine, and one molecule of ATP is hydrogenolyzed for each amidation. In Chlorobium phaeobacteroides (strain BS1), this protein is Cobyric acid synthase.